A 156-amino-acid polypeptide reads, in one-letter code: Small ribosomal subunit protein uS7 (156 aa).

It belongs to the universal ribosomal protein uS7 family. As to quaternary structure, part of the 30S ribosomal subunit. Contacts proteins S9 and S11.

Its function is as follows. One of the primary rRNA binding proteins, it binds directly to 16S rRNA where it nucleates assembly of the head domain of the 30S subunit. Is located at the subunit interface close to the decoding center, probably blocks exit of the E-site tRNA. The polypeptide is Small ribosomal subunit protein uS7 (Prochlorococcus marinus (strain NATL2A)).